A 146-amino-acid chain; its full sequence is Transcriptional regulator MraZ (146 aa).

SpoVT-AbrB domains are found at residues T4 to E46 and T75 to R118.

This sequence belongs to the MraZ family. Forms oligomers.

It localises to the cytoplasm. The protein localises to the nucleoid. The polypeptide is Transcriptional regulator MraZ (Mesomycoplasma hyopneumoniae (strain 232) (Mycoplasma hyopneumoniae)).